The sequence spans 426 residues: Enolase (426 aa).

Q162 lines the (2R)-2-phosphoglycerate pocket. Catalysis depends on E204, which acts as the Proton donor. Mg(2+)-binding residues include D241, E288, and D315. Residues K340, R369, S370, and K391 each contribute to the (2R)-2-phosphoglycerate site. K340 serves as the catalytic Proton acceptor.

This sequence belongs to the enolase family. It depends on Mg(2+) as a cofactor.

The protein localises to the cytoplasm. It is found in the secreted. It localises to the cell surface. It carries out the reaction (2R)-2-phosphoglycerate = phosphoenolpyruvate + H2O. Its pathway is carbohydrate degradation; glycolysis; pyruvate from D-glyceraldehyde 3-phosphate: step 4/5. In terms of biological role, catalyzes the reversible conversion of 2-phosphoglycerate (2-PG) into phosphoenolpyruvate (PEP). It is essential for the degradation of carbohydrates via glycolysis. In Bacteroides thetaiotaomicron (strain ATCC 29148 / DSM 2079 / JCM 5827 / CCUG 10774 / NCTC 10582 / VPI-5482 / E50), this protein is Enolase.